Consider the following 395-residue polypeptide: S-adenosylmethionine synthase (395 aa).

Position 15 (histidine 15) interacts with ATP. Residue aspartate 17 participates in Mg(2+) binding. Position 43 (glutamate 43) interacts with K(+). L-methionine contacts are provided by glutamate 56 and glutamine 99. The segment at 99-109 (QSADIALGVDE) is flexible loop. Residues 174 to 176 (DGK), 240 to 241 (RF), aspartate 249, 255 to 256 (RK), alanine 272, and lysine 276 each bind ATP. L-methionine is bound at residue aspartate 249. Lysine 280 contributes to the L-methionine binding site.

This sequence belongs to the AdoMet synthase family. As to quaternary structure, homotetramer; dimer of dimers. It depends on Mg(2+) as a cofactor. The cofactor is K(+).

The protein resides in the cytoplasm. It catalyses the reaction L-methionine + ATP + H2O = S-adenosyl-L-methionine + phosphate + diphosphate. It participates in amino-acid biosynthesis; S-adenosyl-L-methionine biosynthesis; S-adenosyl-L-methionine from L-methionine: step 1/1. Catalyzes the formation of S-adenosylmethionine (AdoMet) from methionine and ATP. The overall synthetic reaction is composed of two sequential steps, AdoMet formation and the subsequent tripolyphosphate hydrolysis which occurs prior to release of AdoMet from the enzyme. The chain is S-adenosylmethionine synthase from Alkaliphilus oremlandii (strain OhILAs) (Clostridium oremlandii (strain OhILAs)).